The primary structure comprises 235 residues: tRNA (guanine-N(1)-)-methyltransferase (235 aa).

Residues G113 and I133 to L138 contribute to the S-adenosyl-L-methionine site.

This sequence belongs to the RNA methyltransferase TrmD family. As to quaternary structure, homodimer.

The protein localises to the cytoplasm. The catalysed reaction is guanosine(37) in tRNA + S-adenosyl-L-methionine = N(1)-methylguanosine(37) in tRNA + S-adenosyl-L-homocysteine + H(+). Its function is as follows. Specifically methylates guanosine-37 in various tRNAs. The protein is tRNA (guanine-N(1)-)-methyltransferase of Wolbachia sp. subsp. Brugia malayi (strain TRS).